A 245-amino-acid polypeptide reads, in one-letter code: Galectin-3 (245 aa).

Residues 1-30 (MADGFSLNDALAGSGNPNPQGWPGAWGNQP) form a disordered region. Ala2 is modified (N-acetylalanine). Ser6 carries the phosphoserine; by CK1 modification. A run of 4 repeats spans residues 35–43 (YPGASYPGA), 44–52 (YPGQAPPGA), 53–61 (YPGQAPPGA), and 62–70 (YPGPTAPGA). Positions 35 to 99 (YPGASYPGAY…PSAPGAYPAA (65 aa)) are 7 X 9 AA tandem repeats of Y-P-G-X(3)-P-[GS]-A. A disordered region spans residues 47-68 (QAPPGAYPGQAPPGAYPGPTAP). The stretch at 71-78 (YPGPAPGA) is one 5; approximate repeat. The 6; approximate repeat unit spans residues 79 to 88 (YPGQPGASGA). One copy of the 7; approximate repeat lies at 89–99 (YPSAPGAYPAA). One can recognise a Galectin domain in the interval 113–243 (YKLPLAGGVM…DITLTSAAPT (131 aa)). Residue 176–182 (WGREERQ) coordinates a beta-D-galactoside. Ser183 bears the Phosphoserine mark. Positions 221–236 (KNLREINQMEISGDIT) match the Nuclear export signal motif.

As to quaternary structure, probably forms homo- or heterodimers. Interacts with DMBT1. Interacts with CD6 and ALCAM. Forms a complex with the ITGA3, ITGB1 and CSPG4. Interacts with LGALS3BP, LYPD3, ZFTRAF1 and UACA. Interacts with TRIM16; this interaction mediates autophagy of damage endomembranes. Interacts with cargo receptor TMED10; the interaction mediates the translocation from the cytoplasm into the ERGIC (endoplasmic reticulum-Golgi intermediate compartment) and thereby secretion. Interacts with and inhibits by binding NCR3/NKp30.

It localises to the cytoplasm. Its subcellular location is the nucleus. The protein resides in the secreted. In terms of biological role, galactose-specific lectin which binds IgE. May mediate with the alpha-3, beta-1 integrin the stimulation by CSPG4 of endothelial cells migration. Together with DMBT1, required for terminal differentiation of columnar epithelial cells during early embryogenesis. In the nucleus: acts as a pre-mRNA splicing factor. Involved in acute inflammatory responses including neutrophil activation and adhesion, chemoattraction of monocytes macrophages, opsonization of apoptotic neutrophils, and activation of mast cells. Together with TRIM16, coordinates the recognition of membrane damage with mobilization of the core autophagy regulators ATG16L1 and BECN1 in response to damaged endomembranes. When secreted, interacts with NK cell-activating receptor NCR3/NKp30 acting as an inhibitory ligand which antagonizes NK cell attack. This is Galectin-3 (LGALS3) from Cricetulus longicaudatus (Long-tailed dwarf hamster).